We begin with the raw amino-acid sequence, 369 residues long: Large ribosomal subunit protein uL4 (369 aa).

T2 bears the N-acetylthreonine mark.

This sequence belongs to the universal ribosomal protein uL4 family.

The sequence is that of Large ribosomal subunit protein uL4 (rpl4) from Dictyostelium discoideum (Social amoeba).